The sequence spans 124 residues: Small ribosomal subunit protein uS12c (124 aa).

The tract at residues 1–28 (MPTFQQLVRSARKPHAKKTKSPALQGCP) is disordered. Basic residues predominate over residues 10-20 (SARKPHAKKTK).

It belongs to the universal ribosomal protein uS12 family. Part of the 30S ribosomal subunit.

The protein resides in the plastid. With S4 and S5 plays an important role in translational accuracy. Located at the interface of the 30S and 50S subunits. The polypeptide is Small ribosomal subunit protein uS12c (rps12) (Prototheca wickerhamii).